Here is a 315-residue protein sequence, read N- to C-terminus: Methionyl-tRNA formyltransferase (315 aa).

109 to 112 is a (6S)-5,6,7,8-tetrahydrofolate binding site; the sequence is SLLP.

This sequence belongs to the Fmt family.

The enzyme catalyses L-methionyl-tRNA(fMet) + (6R)-10-formyltetrahydrofolate = N-formyl-L-methionyl-tRNA(fMet) + (6S)-5,6,7,8-tetrahydrofolate + H(+). Its function is as follows. Attaches a formyl group to the free amino group of methionyl-tRNA(fMet). The formyl group appears to play a dual role in the initiator identity of N-formylmethionyl-tRNA by promoting its recognition by IF2 and preventing the misappropriation of this tRNA by the elongation apparatus. In Lachnospira eligens (strain ATCC 27750 / DSM 3376 / VPI C15-48 / C15-B4) (Eubacterium eligens), this protein is Methionyl-tRNA formyltransferase.